We begin with the raw amino-acid sequence, 527 residues long: Cytokinin dehydrogenase 3 (527 aa).

Residues 1-22 form the signal peptide; sequence MEVAMVCTRVNLLILILSLCSP. The 180-residue stretch at 52-231 folds into the FAD-binding PCMH-type domain; sequence LFHSPSAVLK…TRARILLQEA (180 aa). The FAD site is built by alanine 87, glycine 89, and glycine 91. Histidine 92 is subject to Pros-8alpha-FAD histidine. Serine 93, glutamine 97, aspartate 155, threonine 160, serine 166, isoleucine 170, and isoleucine 221 together coordinate FAD. A glycan (N-linked (GlcNAc...) asparagine) is linked at asparagine 413. Residues tyrosine 471 and glutamine 509 each coordinate FAD.

It belongs to the oxygen-dependent FAD-linked oxidoreductase family. Monomer. Requires FAD as cofactor. In terms of tissue distribution, expressed in inflorescence meristems. Highly expressed in lamina joints, and mainly in the parenchyma cells and vascular bundles on the abaxial side of the lamina joint. Expressed in roots, stems, leaves and young panicles.

It is found in the endoplasmic reticulum. The enzyme catalyses N(6)-dimethylallyladenine + A + H2O = 3-methyl-2-butenal + adenine + AH2. Functionally, catalyzes the oxidation of cytokinins, a family of N(6)-substituted adenine derivatives, where the substituent is an isopentenyl group. Cytokinins are plant hormones essential for plant growth, development, and stress responses. Exhibits specific activities toward trans-zeatin (tZ) and isopentenyladenine (iP). Plays a role in lamina joint inclination. Regulates cell proliferation and vascular bundle number on the abaxial side of lamina joint. This chain is Cytokinin dehydrogenase 3, found in Oryza sativa subsp. japonica (Rice).